We begin with the raw amino-acid sequence, 341 residues long: Diguanylate cyclase DgcP (341 aa).

The 137-residue stretch at 18-154 (SLESLVRQLL…LFAGLIAQYI (137 aa)) folds into the GAF domain. In terms of domain architecture, GGDEF spans 204 to 337 (HKIMIAFIDL…KQKTPFVAHP (134 aa)). Asp212 provides a ligand contact to Mg(2+). Residues Asn220, His225, and Asp229 each contribute to the substrate site. Asp255 contributes to the Mg(2+) binding site. Asp255 functions as the Proton acceptor in the catalytic mechanism.

As to quaternary structure, homodimer. Mg(2+) serves as cofactor.

It carries out the reaction 2 GTP = 3',3'-c-di-GMP + 2 diphosphate. It participates in purine metabolism; 3',5'-cyclic di-GMP biosynthesis. Its function is as follows. Catalyzes the synthesis of cyclic-di-GMP (c-di-GMP) via the condensation of 2 GTP molecules. Cyclic-di-GMP is a second messenger which controls cell surface-associated traits in bacteria. This Escherichia coli (strain K12) protein is Diguanylate cyclase DgcP.